Reading from the N-terminus, the 33-residue chain is MSDIN-like toxin proprotein 6 (33 aa).

A propeptide spanning residues 1–10 (MSDINATRLP) is cleaved from the precursor. A cross-link (cyclopeptide (Leu-Pro)) is located at residues 11–20 (LILLAALGIP). A propeptide spanning residues 21–33 (SDDADSTLTRGER) is cleaved from the precursor.

Belongs to the MSDIN fungal toxin family. Processed by the macrocyclase-peptidase enzyme POPB to yield a toxic cyclic decapeptide. POPB first removes 10 residues from the N-terminus. Conformational trapping of the remaining peptide forces the enzyme to release this intermediate rather than proceed to macrocyclization. The enzyme rebinds the remaining peptide in a different conformation and catalyzes macrocyclization of the N-terminal 10 residues.

In terms of biological role, probable toxin that belongs to the MSDIN-like toxin family responsible for a large number of food poisoning cases and deaths. This Amanita phalloides (Death cap) protein is MSDIN-like toxin proprotein 6.